Reading from the N-terminus, the 447-residue chain is Polyamine export protein (447 aa).

The Cytoplasmic segment spans residues 1 to 4 (MLNS). The region spanning 1–197 (MLNSIFIIFC…ALAGVLRKQE (197 aa)) is the CNNM transmembrane domain. Residues 5-25 (IFIIFCLIAVSAFFSISEISL) traverse the membrane as a helical segment. Over 26 to 54 (AASRKIKLKLLADEGSINAQRVLKMQENP) the chain is Periplasmic. A helical membrane pass occupies residues 55–75 (GMFFTVVQIGLNAVAILGGIV). Residues 76 to 99 (GDAAFSPAFSALFSHYMSPELSEQ) are Cytoplasmic-facing. The chain crosses the membrane as a helical span at residues 100–120 (LSFILSFSLVTGLFILFADLT). Over 121 to 141 (PKRIGMIAPEAVALRIINPMR) the chain is Periplasmic. Residues 142–162 (FCLFVFRPLVWLFNGMANNIF) form a helical membrane-spanning segment. Over 163 to 447 (RLFKIPMVRK…DAQGKEDSAA (285 aa)) the chain is Cytoplasmic. CBS domains are found at residues 216–275 (MTSR…NQSM) and 282–343 (QIRN…GLEE).

The protein belongs to the UPF0053 family. PaeA subfamily.

Its subcellular location is the cell inner membrane. Functionally, involved in cadaverine and putrescine tolerance in stationary phase. May facilitate the efflux of both cadaverine and putrescine from the cytoplasm, reducing potentially toxic levels under certain stress conditions. The polypeptide is Polyamine export protein (Salmonella typhimurium (strain 14028s / SGSC 2262)).